Reading from the N-terminus, the 515-residue chain is GMP synthase [glutamine-hydrolyzing] (515 aa).

The region spanning 6 to 198 is the Glutamine amidotransferase type-1 domain; sequence KVIIIDYGSQ…LFHVAKLKAD (193 aa). Catalysis depends on cysteine 83, which acts as the Nucleophile. Active-site residues include histidine 172 and glutamate 174. A GMPS ATP-PPase domain is found at 199 to 390; the sequence is WTMSSFVERA…LGLPDFIIWR (192 aa). Position 226 to 232 (226 to 232) interacts with ATP; it reads SGGIDST.

As to quaternary structure, homodimer.

The catalysed reaction is XMP + L-glutamine + ATP + H2O = GMP + L-glutamate + AMP + diphosphate + 2 H(+). The protein operates within purine metabolism; GMP biosynthesis; GMP from XMP (L-Gln route): step 1/1. Functionally, catalyzes the synthesis of GMP from XMP. The polypeptide is GMP synthase [glutamine-hydrolyzing] (Nitratidesulfovibrio vulgaris (strain DP4) (Desulfovibrio vulgaris)).